The following is a 77-amino-acid chain: Small nuclear ribonucleoprotein G (77 aa).

The region spanning 2 to 77 is the Sm domain; it reads VSTPELKKYM…IISLEALDAI (76 aa).

Belongs to the snRNP Sm proteins family. Component of the Sm core complex, present in spliceosomal snRNP U1, U2, U4/U6 and U5. The core complex contains SMB1, SMD1, SMD2, SMD3, SME1, SMX3 and SMX2 (Sm proteins B, D1, D2, D3, E, F and G, respectively), and is probably a heptameric ring structure. SMX2 specifically interacts with SME1. Belongs to the CWC complex (or CEF1-associated complex), a spliceosome sub-complex reminiscent of a late-stage spliceosome composed of the U2, U5 and U6 snRNAs and at least BUD13, BUD31, BRR2, CDC40, CEF1, CLF1, CUS1, CWC2, CWC15, CWC21, CWC22, CWC23, CWC24, CWC25, CWC27, ECM2, HSH155, IST3, ISY1, LEA1, MSL1, NTC20, PRP8, PRP9, PRP11, PRP19, PRP21, PRP22, PRP45, PRP46, SLU7, SMB1, SMD1, SMD2, SMD3, SMX2, SMX3, SNT309, SNU114, SPP2, SYF1, SYF2, RSE1 and YJU2. Component of the U4/U6-U5 tri-snRNP complex composed of the U4, U6 and U5 snRNAs and at least PRP3, PRP4, PRP6, PRP8, PRP18, PRP31, PRP38, SNU13, SNU23, SNU66, SNU114, SPP381, SMB1, SMD1, SMD2, SMD3, SMX2, SMX3, LSM2, LSM3, LSM4, LSM5, LSM6, LSM7, LSM8, BRR2 and DIB1.

The protein resides in the nucleus. It localises to the cytoplasm. In terms of biological role, plays a role in pre-mRNA splicing as a core component of the spliceosomal U1, U2, U4 and U5 small nuclear ribonucleoproteins (snRNPs), the building blocks of the spliceosome. The polypeptide is Small nuclear ribonucleoprotein G (SMX2) (Saccharomyces cerevisiae (strain ATCC 204508 / S288c) (Baker's yeast)).